The primary structure comprises 295 residues: Small ribosomal subunit biogenesis GTPase RsgA (295 aa).

A CP-type G domain is found at 68–228; sequence KNLLVKPHVA…VVDTPGFANL (161 aa). GTP-binding positions include 117–120 and 170–178; these read NKMD and GLSGVGKSS. Cys-250, Cys-255, His-257, and Cys-263 together coordinate Zn(2+).

Belongs to the TRAFAC class YlqF/YawG GTPase family. RsgA subfamily. Monomer. Associates with 30S ribosomal subunit, binds 16S rRNA. Requires Zn(2+) as cofactor.

It localises to the cytoplasm. Functionally, one of several proteins that assist in the late maturation steps of the functional core of the 30S ribosomal subunit. Helps release RbfA from mature subunits. May play a role in the assembly of ribosomal proteins into the subunit. Circularly permuted GTPase that catalyzes slow GTP hydrolysis, GTPase activity is stimulated by the 30S ribosomal subunit. This is Small ribosomal subunit biogenesis GTPase RsgA from Thermotoga neapolitana (strain ATCC 49049 / DSM 4359 / NBRC 107923 / NS-E).